Consider the following 360-residue polypeptide: Protein RecA (360 aa).

Residue 66-73 (GPESSGKT) participates in ATP binding. Residues 330-360 (DAKAIEERENPEKVKQDKEVPVNKDASDEKK) are disordered.

This sequence belongs to the RecA family.

Its subcellular location is the cytoplasm. Its function is as follows. Can catalyze the hydrolysis of ATP in the presence of single-stranded DNA, the ATP-dependent uptake of single-stranded DNA by duplex DNA, and the ATP-dependent hybridization of homologous single-stranded DNAs. It interacts with LexA causing its activation and leading to its autocatalytic cleavage. In Lactobacillus johnsonii (strain CNCM I-12250 / La1 / NCC 533), this protein is Protein RecA.